The sequence spans 90 residues: YcgL domain-containing protein YE2368 (90 aa).

A YcgL domain is found at 1–85; that stretch reads MLCAIYRSPK…PPESLLKMHL (85 aa).

The sequence is that of YcgL domain-containing protein YE2368 from Yersinia enterocolitica serotype O:8 / biotype 1B (strain NCTC 13174 / 8081).